Here is a 409-residue protein sequence, read N- to C-terminus: MSLHAWEWEEDPASIEPISSITSFYQSTSECDVEEHLKAKARAQESDSDRPCSSIESSSEPASTFSSDVPHVVPCKFTISLAFPVNMGQKGKYASLIEKYKKHPKTDSSVTKMRRFYHIEYFLLPDDEEPKKVDILLFPMVAKVFLESGVKTVKPWHEGDKAWVSWEQTFNITVTKELLKKINFHKITLRLWNTKDKMSRKVRYYRLKTAGFTDDVGAFHKSEVRHLVLNQRKLSEQGIENTNIVREESNQEHPPGKQEKTEKHPKSLQGSHQAEPETSSKNSEEYEKSLKMDDSSTIQWSVSRTPTISLAGASMMEIKELIESESLSSLTNILDRQRSQIKGKDSEGRRKIQRRHKKPLAEEEADPTLTGPRKQSAFSIQLAVMPLLAGTHCLPCSQQLLLVLWPERP.

Positions 36–50 are enriched in basic and acidic residues; sequence HLKAKARAQESDSDR. 3 disordered regions span residues 36–67, 239–298, and 338–373; these read HLKAKARAQESDSDRPCSSIESSSEPASTFSS, IENT…SSTI, and RSQIKGKDSEGRRKIQRRHKKPLAEEEADPTLTGPR. Positions 51-67 are enriched in low complexity; it reads PCSSIESSSEPASTFSS. Over residues 245–265 the composition is skewed to basic and acidic residues; the sequence is VREESNQEHPPGKQEKTEKHP. The segment covering 268–281 has biased composition (polar residues); it reads LQGSHQAEPETSSK. Composition is skewed to basic and acidic residues over residues 282–294 and 338–350; these read NSEEYEKSLKMDD and RSQIKGKDSEGRR.

This is an uncharacterized protein from Homo sapiens (Human).